The sequence spans 472 residues: Mitochondrial substrate carrier family protein C (472 aa).

The Mitochondrial intermembrane segment spans residues 1–189; that stretch reads MVLNENDKEF…ASSLRNTITY (189 aa). EF-hand domains lie at 6 to 41, 42 to 70, 73 to 108, and 110 to 145; these read NDKE…LRIP, SSEK…FEDF, ENIK…LNIP, and YSEQ…LPNS. Aspartate 19, aspartate 21, asparagine 23, lysine 25, glutamate 30, aspartate 55, aspartate 57, aspartate 59, serine 61, glutamate 66, aspartate 86, asparagine 88, serine 90, threonine 92, glutamate 97, aspartate 123, asparagine 125, aspartate 127, glutamine 129, and glutamate 134 together coordinate Ca(2+). Solcar repeat units lie at residues 184–268, 276–362, and 375–461; these read RNTI…VKKL, LTSA…LKHK, and GQLL…FKKA. A helical membrane pass occupies residues 190–207; that stretch reads MLAGSVAGFASRTSTAPL. The Mitochondrial matrix segment spans residues 208–242; that stretch reads ERVKIMCQLNHGKPISLISAFKACYKDGGIKGFFR. Residues 243-263 form a helical membrane-spanning segment; the sequence is GNLANIIKVSPESAVKFGTYE. At 264 to 281 the chain is on the mitochondrial intermembrane side; sequence YVKKLFAENDCELTSAQR. A helical membrane pass occupies residues 282–302; it reads FISGSVAGVVSHTTLFPLEVV. Topologically, residues 303–330 are mitochondrial matrix; that stretch reads RLRLSAEIAGTYNGIFDCFKKIAISEKS. A helical membrane pass occupies residues 331–351; it reads IRPFYRGLGASITATIPHSGV. Residues 352–377 are Mitochondrial intermembrane-facing; sequence NMMVYEFLKHKVIKMTGNEFPTAGQL. The chain crosses the membrane as a helical span at residues 378 to 398; the sequence is LVCASTSSVCGQLVGYPFHVV. Over 399–441 the chain is Mitochondrial matrix; it reads KSRLITQGSSVNQEKYTGLFDGLTKIIKKEGPIGLYKGIVPSF. The chain crosses the membrane as a helical span at residues 442–462; the sequence is MKSIPSHSITFIVYEGFKKAF. The Mitochondrial intermembrane portion of the chain corresponds to 463-472; the sequence is DVNLKEKKHH.

Belongs to the mitochondrial carrier (TC 2.A.29) family.

Its subcellular location is the mitochondrion inner membrane. In terms of biological role, calcium-dependent mitochondrial solute carrier. Mitochondrial solute carriers shuttle metabolites, nucleotides, and cofactors through the mitochondrial inner membrane. The chain is Mitochondrial substrate carrier family protein C (mcfC) from Dictyostelium discoideum (Social amoeba).